The following is a 599-amino-acid chain: E3 ubiquitin-protein ligase Kcmf1 (599 aa).

The ZZ-type zinc-finger motif lies at 4–60 (HEGVSCDSCLKSNFNGRRYKCLICYDYDLCADCYEDGVTSTRHLVEHPMQCILTRSD). Residues C9, C12, C24, C27, C33, C36, H46, and H50 each coordinate Zn(2+). A C2H2-type zinc finger spans residues 78-101 (FTCPYCKKMGFSDATLLEHVSAEH). Disordered stretches follow at residues 155 to 193 (HGGG…PSGR), 229 to 253 (DRQQ…VSTS), 269 to 294 (GSGG…NLRT), 466 to 486 (VEQQ…VNQM), and 507 to 599 (NTTQ…PDTR). Low complexity-rich tracts occupy residues 160-170 (RRIPGRTLGGP) and 180-192 (SSSS…SPSG). The segment covering 269–285 (GSGGSGAVGSGSGGGSG) has biased composition (gly residues). Positions 513–532 (GTGGLGGAGATAAPGGGASG) are enriched in gly residues. Basic and acidic residues predominate over residues 538–547 (TADRGIERRS). A compositionally biased stretch (low complexity) spans 559 to 593 (SQQPQQQQQSTANPAASQQKYKQNASAATAAGNTN).

Belongs to the KCMF1 family. In terms of assembly, interacts with poe.

The catalysed reaction is S-ubiquitinyl-[E2 ubiquitin-conjugating enzyme]-L-cysteine + [acceptor protein]-L-lysine = [E2 ubiquitin-conjugating enzyme]-L-cysteine + N(6)-ubiquitinyl-[acceptor protein]-L-lysine.. Has intrinsic E3 ubiquitin ligase activity and promotes ubiquitination. Involved in the negative regulation of the Ras/MAPK signaling pathway in the wing by acting with the E2 enzyme Unc6 and the putative E3 ligases poe and Ufd4 to mediate the ubiquitination and proteasomal degradation of rl/MAPK. This Drosophila melanogaster (Fruit fly) protein is E3 ubiquitin-protein ligase Kcmf1.